The primary structure comprises 175 residues: Calcineurin subunit B (175 aa).

EF-hand domains follow at residues 21 to 56, 60 to 88, 90 to 125, and 131 to 166; these read PELM…ANNP, RMIA…FSSK, GRDE…MVGN, and QLQQ…TDIV. The Ca(2+) site is built by Asp-34, Asp-36, Ser-38, Ser-40, Glu-45, Asp-66, Asp-68, Ser-70, Thr-72, Glu-77, Asp-103, Asp-105, Asp-107, Tyr-109, Glu-114, Asp-144, Asp-146, Asp-148, Lys-150, and Glu-155.

The protein belongs to the calcineurin regulatory subunit family. As to quaternary structure, composed of a catalytic subunit (A) and a regulatory subunit (B).

Regulatory subunit of calcineurin, a calcium-dependent, calmodulin stimulated protein phosphatase. Confers calcium sensitivity. Plays a central role in virulence and antifungal drug action. This is Calcineurin subunit B (CNB1) from Cryptococcus neoformans var. neoformans serotype D (strain B-3501A) (Filobasidiella neoformans).